A 432-amino-acid chain; its full sequence is MKIGVVSLGCAKNLVDSEILLGKLKGAGVELTPNPEEADVIIVNTCGFIEPAKLESIETILEFAESGKEVIVMGCLVERYKEELEKEIPEVKAYFGTESWNEILNYLGLKEKKEIKRILSTPRSYAYLKIAEGCNRLCSFCAIPKIRGRHRSRKIEEIVDEAKFLADQGVKEICVVSQDTTYYGKDLYKEYKLVELLEGLEKVEGIKWIRLLYLYPTEVHEDLIDYVANSEKVLPYFDVPLQHVSDRVLKDMRRGYDGKFVRNLIENIRKKIENAVFRTTFIVGFPTESEEDFKELKKFVEEGHFHWLGVFTYSPEEGTHAYPLGDPIPREVKEERREELMAIQRGITRKKNEEFLGKEIEVLIDGYEEEFSFVPKGRAYFQAPEVDGVVYVESSRDLKSGDILKVKVTQVADYDLAGRDTEALDLIFSSEE.

The 112-residue stretch at 1–112 (MKIGVVSLGC…ILNYLGLKEK (112 aa)) folds into the MTTase N-terminal domain. [4Fe-4S] cluster-binding residues include Cys10, Cys46, Cys75, Cys134, Cys138, and Cys141. The 231-residue stretch at 120-350 (STPRSYAYLK…MAIQRGITRK (231 aa)) folds into the Radical SAM core domain. The 70-residue stretch at 353–422 (EEFLGKEIEV…DYDLAGRDTE (70 aa)) folds into the TRAM domain.

It belongs to the methylthiotransferase family. RimO subfamily. It depends on [4Fe-4S] cluster as a cofactor.

The protein resides in the cytoplasm. The enzyme catalyses L-aspartate(89)-[ribosomal protein uS12]-hydrogen + (sulfur carrier)-SH + AH2 + 2 S-adenosyl-L-methionine = 3-methylsulfanyl-L-aspartate(89)-[ribosomal protein uS12]-hydrogen + (sulfur carrier)-H + 5'-deoxyadenosine + L-methionine + A + S-adenosyl-L-homocysteine + 2 H(+). Its function is as follows. Catalyzes the methylthiolation of an aspartic acid residue of ribosomal protein uS12. The polypeptide is Ribosomal protein uS12 methylthiotransferase RimO (Aquifex aeolicus (strain VF5)).